Here is a 338-residue protein sequence, read N- to C-terminus: Isopenicillin N synthase (338 aa).

The isopenicillin N site is built by arginine 89, tyrosine 93, serine 185, and tyrosine 191. Positions 89, 93, 185, 191, 216, and 218 each coordinate N-[(5S)-5-amino-5-carboxypentanoyl]-L-cysteinyl-D-valine. The Fe2OG dioxygenase domain maps to 182-290 (TLSSVVLIRY…RQSLPFFVNL (109 aa)). Residues histidine 216, aspartate 218, and histidine 272 each contribute to the Fe(2+) site. 2-oxoglutarate is bound at residue arginine 281. Serine 283 is a binding site for isopenicillin N. Serine 283 serves as a coordination point for N-[(5S)-5-amino-5-carboxypentanoyl]-L-cysteinyl-D-valine.

It belongs to the iron/ascorbate-dependent oxidoreductase family. In terms of assembly, monomer. The cofactor is Fe(2+).

It is found in the cytoplasm. The protein resides in the cytosol. It catalyses the reaction N-[(5S)-5-amino-5-carboxypentanoyl]-L-cysteinyl-D-valine + O2 = isopenicillin N + 2 H2O. Its pathway is antibiotic biosynthesis; penicillin G biosynthesis; penicillin G from L-alpha-aminoadipate and L-cysteine and L-valine: step 2/3. Its function is as follows. Isopenicillin N synthase; part of the gene cluster that mediates the biosynthesis of penicillin, the world's most important antibiotic. IpnA catalyzes the cyclization of the tripeptide N-[(5S)-5-amino-5-carboxypentanoyl]-L-cysteinyl-D-valine (LLD-ACV or ACV) to form isopenicillin N (IPN) that contains the beta-lactam nucleus. The penicillin biosynthesis occurs via 3 enzymatic steps, the first corresponding to the production of the tripeptide N-[(5S)-5-amino-5-carboxypentanoyl]-L-cysteinyl-D-valine (LLD-ACV or ACV) by the NRPS pcbAB. The tripeptide ACV is then cyclized to isopenicillin N (IPN) by the isopenicillin N synthase pcbC that forms the beta-lactam nucleus. Finally, the alpha-aminoadipyl side chain is exchanged for phenylacetic acid by the isopenicillin N acyltransferase penDE to yield penicillin in the peroxisomal matrix. In Hapsidospora chrysogena (Acremonium chrysogenum), this protein is Isopenicillin N synthase (PCBC).